A 105-amino-acid polypeptide reads, in one-letter code: MSTKNKKAAGGNGGAPKQTRQQSHDSQDYSSFKTVLFYCMLIVFLPVLTFFVLKGFVLDQFLDISEVKVNIASAVGAVVALHIALGLYIYRAYFGAPGSKGSKTD.

The tract at residues 1–26 (MSTKNKKAAGGNGGAPKQTRQQSHDS) is disordered. Residues 1–36 (MSTKNKKAAGGNGGAPKQTRQQSHDSQDYSSFKTVL) are Cytoplasmic-facing. Residues 37–57 (FYCMLIVFLPVLTFFVLKGFV) form a helical membrane-spanning segment. Residues 58 to 68 (LDQFLDISEVK) lie on the Lumenal side of the membrane. Residues 69-89 (VNIASAVGAVVALHIALGLYI) traverse the membrane as a helical segment. Residues 90–105 (YRAYFGAPGSKGSKTD) lie on the Cytoplasmic side of the membrane.

It belongs to the VMA21 family.

Its subcellular location is the endoplasmic reticulum membrane. The protein resides in the endoplasmic reticulum-Golgi intermediate compartment membrane. The protein localises to the cytoplasmic vesicle. It is found in the COPII-coated vesicle membrane. Required for the assembly of the V0 complex of the vacuolar ATPase (V-ATPase) in the endoplasmic reticulum. This Drosophila simulans (Fruit fly) protein is Vacuolar ATPase assembly integral membrane protein VMA21 homolog.